Consider the following 250-residue polypeptide: Ribose-5-phosphate isomerase A (250 aa).

Substrate contacts are provided by residues 33–36, 89–92, and 102–105; these read TGST, DGAD, and KGGG. Residue Glu111 is the Proton acceptor of the active site. Residue Lys129 coordinates substrate.

The protein belongs to the ribose 5-phosphate isomerase family. As to quaternary structure, homodimer.

It carries out the reaction aldehydo-D-ribose 5-phosphate = D-ribulose 5-phosphate. It functions in the pathway carbohydrate degradation; pentose phosphate pathway; D-ribose 5-phosphate from D-ribulose 5-phosphate (non-oxidative stage): step 1/1. Functionally, catalyzes the reversible conversion of ribose-5-phosphate to ribulose 5-phosphate. The chain is Ribose-5-phosphate isomerase A from Cereibacter sphaeroides (strain ATCC 17025 / ATH 2.4.3) (Rhodobacter sphaeroides).